We begin with the raw amino-acid sequence, 73 residues long: Bacterioferritin-associated ferredoxin (73 aa).

The [2Fe-2S] cluster site is built by Cys-4 and Cys-6. Residues Arg-26 and Arg-29 each contribute to the phosphate site. 2 residues coordinate [2Fe-2S] cluster: Cys-38 and Cys-41. Phosphate is bound at residue Lys-46.

This sequence belongs to the Bfd family. Monomer. Interacts with BfrB; up to 12 Bfd proteins can bind to the BfrB bacterioferritin complex (BFR). One Bfd protein binds to a BfrB dimer in the BFR, with the [2Fe-2S] cluster positioned about 22 Angstroms above the heme of BfrB. Does not interact with FtnA. [2Fe-2S] cluster is required as a cofactor. It depends on phosphate as a cofactor.

Its function is as follows. Required for mobilization of iron from the bacterioferritin (BFR) complex, composed of BfrB and FtnA in varying proportions; mobilization requires the [2Fe-2S] cluster of this protein. Reduction of the BfrB heme group occurs in the presence of Bfd, strongly suggesting that the BfrB-Bfd complex allows heme to mediate electron transfer from FPR to the Fe(3+) iron core in the BFR prior to its release as Fe(2+). This Pseudomonas aeruginosa (strain ATCC 15692 / DSM 22644 / CIP 104116 / JCM 14847 / LMG 12228 / 1C / PRS 101 / PAO1) protein is Bacterioferritin-associated ferredoxin.